Reading from the N-terminus, the 285-residue chain is Acetylglutamate kinase (285 aa).

Substrate is bound by residues 64–65 (GG), Arg86, and Asn179.

This sequence belongs to the acetylglutamate kinase family. ArgB subfamily.

It is found in the plastid. The protein resides in the chloroplast. It carries out the reaction N-acetyl-L-glutamate + ATP = N-acetyl-L-glutamyl 5-phosphate + ADP. It participates in amino-acid biosynthesis; L-arginine biosynthesis; N(2)-acetyl-L-ornithine from L-glutamate: step 2/4. Functionally, catalyzes the ATP-dependent phosphorylation of N-acetyl-L-glutamate. In Pyropia yezoensis (Susabi-nori), this protein is Acetylglutamate kinase.